The following is a 103-amino-acid chain: Large ribosomal subunit protein bL21 (103 aa).

It belongs to the bacterial ribosomal protein bL21 family. Part of the 50S ribosomal subunit. Contacts protein L20.

Functionally, this protein binds to 23S rRNA in the presence of protein L20. This Chloroflexus aurantiacus (strain ATCC 29364 / DSM 637 / Y-400-fl) protein is Large ribosomal subunit protein bL21.